The sequence spans 178 residues: MYLLSPRNGDEEDEQEEIQELISDDEPPNLKLASCATAASSSSSSGSDMEKGRGKACGGGSTAPPPPPPSSSGKSGGGGGSNIREAAASGGGGGVWGKYFSVESLLLLVCVTASLVILPLVLPPLPPPPSMLMLVPVAMLVLLLALAFMPTTTSSSSSAGGGGGGGRNGATTGHAPYL.

The interval 1-85 (MYLLSPRNGD…GGGGGSNIRE (85 aa)) is disordered. Over residues 10–27 (DEEDEQEEIQELISDDEP) the composition is skewed to acidic residues. A compositionally biased stretch (low complexity) spans 33-47 (ASCATAASSSSSSGS). Positions 100–151 (FSVESLLLLVCVTASLVILPLVLPPLPPPPSMLMLVPVAMLVLLLALAFMPT) are organ Size Related (OSR) domain. Transmembrane regions (helical) follow at residues 105-125 (LLLL…LPPL) and 131-151 (MLML…FMPT). The segment at 153–178 (TSSSSSAGGGGGGGRNGATTGHAPYL) is disordered. Residues 159–168 (AGGGGGGGRN) show a composition bias toward gly residues. Low complexity predominate over residues 169-178 (GATTGHAPYL).

It belongs to the plant organ size related (OSR) protein family. In terms of tissue distribution, mostly expressed in young tissues such as young roots, young leaves, and seeds. Also present in stems, mature leaves, and spikelets.

It localises to the membrane. The protein localises to the nucleus. Its subcellular location is the cytoplasm. The protein resides in the endoplasmic reticulum. Its function is as follows. Promotes both cell expansion and proliferation-dependent organ growth. This is Protein AUXIN-REGULATED GENE INVOLVED IN ORGAN SIZE (ARGOS) from Oryza sativa subsp. japonica (Rice).